A 57-amino-acid polypeptide reads, in one-letter code: Large ribosomal subunit protein bL32 (57 aa).

This sequence belongs to the bacterial ribosomal protein bL32 family.

The chain is Large ribosomal subunit protein bL32 from Lysinibacillus sphaericus (strain C3-41).